We begin with the raw amino-acid sequence, 519 residues long: MMRCGEGYPGLILAKEDFIMKPVDMAAADINAEYLGVPRLSLMENAGRAVAEEIGNAVDSGRVAIFCGPGGNGGDGFVAARHLLNMGFEVEVHLLGHPERIGSEEALVNWGVLGAMQPHPGGFSVDFVRDSSEIKPTDADVVVDAILGTGVRGSIREPSRSAIEIINRSEAFRVSVDIPSGLNPETGAVEDIAVSADLTVTFHRMKDGLKLADPAVTGEIVVRDIGIPPAAEIFMGPGDLLRIPSRRPGSHKGENGRVLIIGGSRQYSGAPAIAAKAALRAGADIVMVAAPGSAARAIRSLSPDLIVRELEGGYIGMESLDEILELAEKADSVLMGCGAGRETSTARTFMRAIEDLHEMEKPIVLDADALRLMDYSDVSEYRELTVTPHMAEFSSFFKLKSMIFNDFRESVSAFQSISSRIRGTVLLKGRIDMIFQGDRLRLNKTGCPGMTVGGTGDALAGLTAGLRALGLSSFDSASLAAFINGMAGELAMERHGNGFTASDMVDMIPSVMDPGFYGF.

The tract at residues 1 to 233 (MMRCGEGYPG…DIGIPPAAEI (233 aa)) is NAD(P)H-hydrate epimerase. One can recognise a YjeF N-terminal domain in the interval 25 to 233 (MAAADINAEY…DIGIPPAAEI (209 aa)). Residues 71-75 (GNGGD) are NADPHX 1; for epimerase activity. Asparagine 72 and aspartate 144 together coordinate K(+). Positions 148–154 (GTGVRGS) are NADPHX 1; for epimerase activity. Aspartate 177 lines the (6S)-NADPHX pocket. Serine 180 serves as a coordination point for K(+). The YjeF C-terminal domain occupies 235–515 (MGPGDLLRIP…DMIPSVMDPG (281 aa)). The segment at 235-519 (MGPGDLLRIP…SVMDPGFYGF (285 aa)) is ADP-dependent (S)-NAD(P)H-hydrate dehydratase. Glycine 338 contributes to the (6S)-NADPHX binding site. The tract at residues 389–395 (HMAEFSS) is NADPHX 2; for dehydratase activity. Residues 428–432 (KGRID) and 447–456 (CPGMTVGGTG) contribute to the ADP site. Residue aspartate 457 participates in (6S)-NADPHX binding.

It in the N-terminal section; belongs to the NnrE/AIBP family. This sequence in the C-terminal section; belongs to the NnrD/CARKD family. The cofactor is K(+).

It carries out the reaction (6S)-NADHX + ADP = AMP + phosphate + NADH + H(+). It catalyses the reaction (6S)-NADPHX + ADP = AMP + phosphate + NADPH + H(+). The enzyme catalyses (6R)-NADHX = (6S)-NADHX. The catalysed reaction is (6R)-NADPHX = (6S)-NADPHX. Functionally, bifunctional enzyme that catalyzes the epimerization of the S- and R-forms of NAD(P)HX and the dehydration of the S-form of NAD(P)HX at the expense of ADP, which is converted to AMP. This allows the repair of both epimers of NAD(P)HX, a damaged form of NAD(P)H that is a result of enzymatic or heat-dependent hydration. In Methanothermobacter thermautotrophicus (strain ATCC 29096 / DSM 1053 / JCM 10044 / NBRC 100330 / Delta H) (Methanobacterium thermoautotrophicum), this protein is Bifunctional NAD(P)H-hydrate repair enzyme Nnr (nnr).